Consider the following 657-residue polypeptide: Putative GreA-associated domains protein (657 aa).

The 152-residue stretch at 1–152 folds into the GRAD2 domain; it reads MDTRDLTAYS…EQEGNKEKAT (152 aa). The region spanning 153–657 is the GRAD1 domain; it reads EFYKKALYRF…TAGSFGTLWE (505 aa).

In Treponema pallidum (strain Nichols), this protein is Putative GreA-associated domains protein.